Reading from the N-terminus, the 68-residue chain is Alpha-conotoxin Lp1.4 (68 aa).

The first 21 residues, 1–21 (MGMRMMSIMFMLVVLATTVVS), serve as a signal peptide directing secretion. The propeptide occupies 22–48 (FTSDRALDAMNAAASKKASRLIALAVR). 2 cysteine pairs are disulfide-bonded: C50-C56 and C51-C64. Residues 52 to 54 (SHP) form a ser-Xaa-Pro motif, crucial for potent interaction with nAChR region. An Aspartic acid 1-amide modification is found at D65.

Belongs to the conotoxin A superfamily. As to expression, expressed by the venom duct.

The protein localises to the secreted. Functionally, alpha-conotoxins act on postsynaptic membranes, they bind to the nicotinic acetylcholine receptors (nAChR) and thus inhibit them. This toxin inhibits mouse muscle alpha-1-beta-1-gamma-delta (CHRNA1-CHRNB1-CHRNG-CHRND), and weakly rat neuronal alpha-6/alpha-3-beta-2 (CHRNA6/CHRNA3-CHRNB2). The protein is Alpha-conotoxin Lp1.4 of Conus leopardus (Leopard cone).